The sequence spans 92 residues: Small ribosomal subunit protein uS19 (92 aa).

It belongs to the universal ribosomal protein uS19 family.

Functionally, protein S19 forms a complex with S13 that binds strongly to the 16S ribosomal RNA. The chain is Small ribosomal subunit protein uS19 from Gloeobacter violaceus (strain ATCC 29082 / PCC 7421).